A 254-amino-acid polypeptide reads, in one-letter code: Fasciclin-like arabinogalactan protein 7 (254 aa).

A signal peptide spans 1–22 (MAKMQLSIFIAVVALIVCSASA). Positions 44–186 (NVNLTELLSV…VAVYQVNRVL (143 aa)) constitute an FAS1 domain. 4 N-linked (GlcNAc...) asparagine glycosylation sites follow: N46, N78, N104, and N130. The segment at 203–233 (APAPIVSAPSDSPSVADSEGASSPKSSHKNS) is disordered. Residues 206-220 (PIVSAPSDSPSVADS) show a composition bias toward low complexity. Positions 222 to 233 (GASSPKSSHKNS) are enriched in polar residues. Residue N232 is the site of GPI-anchor amidated asparagine attachment. A propeptide spans 233 to 254 (SGQKLLLAPISMVISGLVALFL) (removed in mature form).

It belongs to the fasciclin-like AGP family.

It localises to the cell membrane. Its function is as follows. May be a cell surface adhesion protein. The polypeptide is Fasciclin-like arabinogalactan protein 7 (FLA7) (Arabidopsis thaliana (Mouse-ear cress)).